Reading from the N-terminus, the 66-residue chain is Cell division protein FtsB (66 aa).

Topologically, residues 1-3 (MKM) are cytoplasmic. A helical membrane pass occupies residues 4–21 (LKIFLLFLLFWLQCSLWI). The Extracellular segment spans residues 22 to 66 (GKNGILDYIKIYKKIIVQKKKNEDFQIRNNQLILEIERLNNAIKN). Positions 38 to 66 (VQKKKNEDFQIRNNQLILEIERLNNAIKN) form a coiled coil.

This sequence belongs to the FtsB family.

The protein localises to the cell membrane. In terms of biological role, essential cell division protein. May link together the upstream cell division proteins, which are predominantly cytoplasmic, with the downstream cell division proteins, which are predominantly extracellular. In Buchnera aphidicola subsp. Schizaphis graminum (strain Sg), this protein is Cell division protein FtsB.